The chain runs to 274 residues: Large ribosomal subunit protein uL2 (274 aa).

The segment at 223–264 (VAMNPVDHPHGGGEGRTSGGRHPVSPWGVPTKGYKTRSNKRT) is disordered.

This sequence belongs to the universal ribosomal protein uL2 family. As to quaternary structure, part of the 50S ribosomal subunit. Forms a bridge to the 30S subunit in the 70S ribosome.

Its function is as follows. One of the primary rRNA binding proteins. Required for association of the 30S and 50S subunits to form the 70S ribosome, for tRNA binding and peptide bond formation. It has been suggested to have peptidyltransferase activity; this is somewhat controversial. Makes several contacts with the 16S rRNA in the 70S ribosome. The protein is Large ribosomal subunit protein uL2 of Shewanella denitrificans (strain OS217 / ATCC BAA-1090 / DSM 15013).